A 382-amino-acid chain; its full sequence is Mannitol-1-phosphate 5-dehydrogenase (382 aa).

Ala-3–Gly-14 is an NAD(+) binding site. Lys-269 is modified (N6-acetyllysine).

The protein belongs to the mannitol dehydrogenase family.

The catalysed reaction is D-mannitol 1-phosphate + NAD(+) = beta-D-fructose 6-phosphate + NADH + H(+). The polypeptide is Mannitol-1-phosphate 5-dehydrogenase (Escherichia coli O45:K1 (strain S88 / ExPEC)).